Here is a 227-residue protein sequence, read N- to C-terminus: ATP synthase F(0) complex subunit a (227 aa).

6 consecutive transmembrane segments (helical) span residues 14-34 (LLGI…LPSP), 69-89 (WALI…LGLL), 98-118 (QLSM…LTGL), 139-159 (IPAL…ALGV), 174-194 (LIST…VLTA), and 196-216 (VLLL…YVFV).

Belongs to the ATPase A chain family. As to quaternary structure, component of the ATP synthase complex composed at least of ATP5F1A/subunit alpha, ATP5F1B/subunit beta, ATP5MC1/subunit c (homooctomer), MT-ATP6/subunit a, MT-ATP8/subunit 8, ATP5ME/subunit e, ATP5MF/subunit f, ATP5MG/subunit g, ATP5MK/subunit k, ATP5MJ/subunit j, ATP5F1C/subunit gamma, ATP5F1D/subunit delta, ATP5F1E/subunit epsilon, ATP5PF/subunit F6, ATP5PB/subunit b, ATP5PD/subunit d, ATP5PO/subunit OSCP. ATP synthase complex consists of a soluble F(1) head domain (subunits alpha(3) and beta(3)) - the catalytic core - and a membrane F(0) domain - the membrane proton channel (subunits c, a, 8, e, f, g, k and j). These two domains are linked by a central stalk (subunits gamma, delta, and epsilon) rotating inside the F1 region and a stationary peripheral stalk (subunits F6, b, d, and OSCP). Interacts with DNAJC30; interaction is direct.

Its subcellular location is the mitochondrion inner membrane. The enzyme catalyses H(+)(in) = H(+)(out). Its function is as follows. Subunit a, of the mitochondrial membrane ATP synthase complex (F(1)F(0) ATP synthase or Complex V) that produces ATP from ADP in the presence of a proton gradient across the membrane which is generated by electron transport complexes of the respiratory chain. ATP synthase complex consist of a soluble F(1) head domain - the catalytic core - and a membrane F(1) domain - the membrane proton channel. These two domains are linked by a central stalk rotating inside the F(1) region and a stationary peripheral stalk. During catalysis, ATP synthesis in the catalytic domain of F(1) is coupled via a rotary mechanism of the central stalk subunits to proton translocation. With the subunit c (ATP5MC1), forms the proton-conducting channel in the F(0) domain, that contains two crucial half-channels (inlet and outlet) that facilitate proton movement from the mitochondrial intermembrane space (IMS) into the matrix. Protons are taken up via the inlet half-channel and released through the outlet half-channel, following a Grotthuss mechanism. This chain is ATP synthase F(0) complex subunit a, found in Struthio camelus (Common ostrich).